Reading from the N-terminus, the 430-residue chain is Signal recognition particle protein (430 aa).

Residues 105–112 (GLQGSGKT), 187–191 (DTAGR), and 245–248 (TKLD) each bind GTP.

The protein belongs to the GTP-binding SRP family. SRP54 subfamily. In terms of assembly, part of the signal recognition particle protein translocation system, which is composed of SRP and FtsY.

Its subcellular location is the cytoplasm. The enzyme catalyses GTP + H2O = GDP + phosphate + H(+). In terms of biological role, involved in targeting and insertion of nascent membrane proteins into the cytoplasmic membrane. Binds to the hydrophobic signal sequence of the ribosome-nascent chain (RNC) as it emerges from the ribosomes. The SRP-RNC complex is then targeted to the cytoplasmic membrane where it interacts with the SRP receptor FtsY. The polypeptide is Signal recognition particle protein (Thermus aquaticus).